Consider the following 372-residue polypeptide: Nucleosome assembly protein 1;1 (372 aa).

Residues 26–80 are a coiled coil; sequence VNALKNKLQNLAGQRSDVLENLTPNVRKRVDALRDIQSQHDELEAKFREERAILE. A Phosphoserine modification is found at Ser-41. The Nuclear export signal motif lies at 47 to 62; sequence LTPNVRKRVDALRDIQ. The Nuclear localization signal motif lies at 223-228; the sequence is KKKPKK. The segment at 299–372 is disordered; it reads AMEAEDFEID…DERPPECKQQ (74 aa). Acidic residues predominate over residues 300–337; it reads MEAEDFEIDDDEEDDIDEDEDEEDEEDEEDDDDEDEEE. Residues 360 to 372 are compositionally biased toward basic and acidic residues; that stretch reads GKQDERPPECKQQ. Cys-369 carries the post-translational modification Cysteine methyl ester. The S-farnesyl cysteine moiety is linked to residue Cys-369. Positions 370-372 are cleaved as a propeptide — removed in mature form; that stretch reads KQQ.

It belongs to the nucleosome assembly protein (NAP) family. Can form homomeric and heteromeric protein complexes with NAP1;2, NAP1;3 and NAP1;4. Binds histone H2A. Interacts with PP438/PNM1. Post-translationally, prenylation of the protein is required for its function during the cell proliferation phase of leaf development. In terms of tissue distribution, ubiquitous.

It localises to the nucleus. The protein localises to the cytoplasm. Its function is as follows. May modulate chromatin structure by regulation of nucleosome assembly/disassembly. Contributes to the regulation of cell proliferation and cell expansion. May function in nucleotide excision repair (NER). Involved in somatic homologous recombination. This is Nucleosome assembly protein 1;1 (NAP1;1) from Arabidopsis thaliana (Mouse-ear cress).